We begin with the raw amino-acid sequence, 276 residues long: NH(3)-dependent NAD(+) synthetase (276 aa).

An ATP-binding site is contributed by 51 to 58 (GISGGVDS). Asp57 is a Mg(2+) binding site. Arg148 serves as a coordination point for deamido-NAD(+). Position 168 (Thr168) interacts with ATP. Glu173 serves as a coordination point for Mg(2+). Deamido-NAD(+) contacts are provided by Lys181 and Asp188. ATP contacts are provided by Lys197 and Thr219. Deamido-NAD(+) is bound at residue 268–269 (HK).

This sequence belongs to the NAD synthetase family. As to quaternary structure, homodimer.

It catalyses the reaction deamido-NAD(+) + NH4(+) + ATP = AMP + diphosphate + NAD(+) + H(+). It functions in the pathway cofactor biosynthesis; NAD(+) biosynthesis; NAD(+) from deamido-NAD(+) (ammonia route): step 1/1. Catalyzes the ATP-dependent amidation of deamido-NAD to form NAD. Uses ammonia as a nitrogen source. This chain is NH(3)-dependent NAD(+) synthetase, found in Streptomyces coelicolor (strain ATCC BAA-471 / A3(2) / M145).